Consider the following 562-residue polypeptide: Tubby-related protein 2 (562 aa).

Residues Met-1 to Asp-81 are disordered. Residues Gln-35–Lys-46 show a composition bias toward basic and acidic residues. Phosphoserine occurs at positions 152, 153, and 155. A disordered region spans residues Leu-179–Cys-294. Thr-211 carries the phosphothreonine modification. Residue Ser-213 is modified to Phosphoserine. Over residues Asp-225–Thr-240 the composition is skewed to basic and acidic residues. Residues Ser-285–Cys-294 show a composition bias toward polar residues.

This sequence belongs to the TUB family. As to expression, expressed in retina and testis.

The protein resides in the cytoplasm. It localises to the secreted. In Mus musculus (Mouse), this protein is Tubby-related protein 2 (Tulp2).